Here is a 59-residue protein sequence, read N- to C-terminus: uncharacterized protein (59 aa).

Composition is skewed to basic and acidic residues over residues 1-23 (MAEH…DAGR) and 36-45 (DPQRASEAGK). The disordered stretch occupies residues 1 to 59 (MAEHRGGSGNFAEDREKASDAGRKGGQHSGGNFKNDPQRASEAGKKGGQQSGGNKSGKS). A compositionally biased stretch (gly residues) spans 46-59 (KGGQQSGGNKSGKS).

It belongs to the con-10 family.

This is an uncharacterized protein from Escherichia coli (strain K12).